The sequence spans 656 residues: Acetyl-coenzyme A synthetase (656 aa).

CoA-binding positions include 198 to 201 (RGGR) and threonine 316. Residues 392 to 394 (GEP), 416 to 421 (DTFWQT), aspartate 507, and arginine 522 each bind ATP. Serine 530 serves as a coordination point for CoA. Arginine 533 is an ATP binding site. Mg(2+) is bound by residues valine 544, histidine 546, and valine 549. Position 591 (arginine 591) interacts with CoA. Lysine 616 bears the N6-acetyllysine mark.

Belongs to the ATP-dependent AMP-binding enzyme family. It depends on Mg(2+) as a cofactor. In terms of processing, acetylated. Deacetylation by the SIR2-homolog deacetylase activates the enzyme.

It carries out the reaction acetate + ATP + CoA = acetyl-CoA + AMP + diphosphate. Functionally, catalyzes the conversion of acetate into acetyl-CoA (AcCoA), an essential intermediate at the junction of anabolic and catabolic pathways. AcsA undergoes a two-step reaction. In the first half reaction, AcsA combines acetate with ATP to form acetyl-adenylate (AcAMP) intermediate. In the second half reaction, it can then transfer the acetyl group from AcAMP to the sulfhydryl group of CoA, forming the product AcCoA. In Rhodobacter capsulatus (strain ATCC BAA-309 / NBRC 16581 / SB1003), this protein is Acetyl-coenzyme A synthetase.